Here is a 616-residue protein sequence, read N- to C-terminus: General alpha-glucoside permease (616 aa).

The Cytoplasmic segment spans residues 1–115; that stretch reads MKNIISLVSK…AALWSILVST (115 aa). A compositionally biased stretch (basic and acidic residues) spans 15 to 27; that stretch reads SKNEDKNISESSR. Residues 15 to 40 are disordered; that stretch reads SKNEDKNISESSRDIVNQQEVFNTED. Residues 116–136 traverse the membrane as a helical segment; sequence TLVMEGYDTALLSALYALPVF. The Extracellular segment spans residues 137–160; the sequence is QRKFGTLNGEGSYEITSQWQIGLN. Residues 161–181 traverse the membrane as a helical segment; sequence MCVLCGEMIGLQITTYMVEFM. The Cytoplasmic portion of the chain corresponds to 182-191; it reads GNRYTMITAL. The chain crosses the membrane as a helical span at residues 192–212; that stretch reads GLLTAYIFILYYCKSLAMIAV. The Extracellular segment spans residues 213–214; that stretch reads GQ. A helical transmembrane segment spans residues 215–235; that stretch reads ILSAIPWGCFQSLAVTYASEV. Residues 236–242 lie on the Cytoplasmic side of the membrane; that stretch reads CPLALRY. The chain crosses the membrane as a helical span at residues 243–263; it reads YMTSYSNICWLFGQIFASGIM. Residues 264–278 lie on the Extracellular side of the membrane; the sequence is KNSQENLGNSDLGYK. A helical transmembrane segment spans residues 279–299; sequence LPFALQWIWPAPLMIGIFFAP. The Cytoplasmic segment spans residues 300 to 373; the sequence is ESPWWLVRKD…VNGRRTRLAC (74 aa). A helical membrane pass occupies residues 374-394; that stretch reads LTWVAQNSSGAVLLGYSTYFF. Residues 395 to 404 lie on the Extracellular side of the membrane; the sequence is ERAGMATDKA. The helical transmembrane segment at 405–425 threads the bilayer; that stretch reads FTFSLIQYCLGLAGTLCSWVI. Residues 426–433 lie on the Cytoplasmic side of the membrane; the sequence is SGRVGRWT. Residues 434–454 traverse the membrane as a helical segment; sequence ILTYGLAFQMVCLFIIGGMGF. At 455–466 the chain is on the extracellular side; it reads GSGSSASNGAGG. A helical membrane pass occupies residues 467–487; that stretch reads LLLALSFFYNAGIGAVVYCIV. The Cytoplasmic portion of the chain corresponds to 488-504; that stretch reads AEIPSAELRTKTIVLAR. Residues 505–525 traverse the membrane as a helical segment; that stretch reads ICYNLMAVINAILTPYMLNVS. Over 526 to 532 the chain is Extracellular; the sequence is DWNWGAK. The helical transmembrane segment at 533 to 553 threads the bilayer; that stretch reads TGLYWGGFTAVTLAWVIIDLP. The Cytoplasmic segment spans residues 554-616; sequence ETTGRTFSEI…QRELNAADKC (63 aa). Residues 587 to 616 form a disordered region; sequence GKTQHDSLADESISQSSSIKQRELNAADKC. The segment covering 606–616 has biased composition (basic and acidic residues); sequence KQRELNAADKC.

The protein belongs to the major facilitator superfamily. Sugar transporter (TC 2.A.1.1) family.

It is found in the cell membrane. In terms of biological role, high-affinity uptake of alpha-glucosides such as maltose, turanose, isomaltose, alpha-methylglucoside, maltotriose, palatinose, trehalose, melezitose and glucose. Acts with the concomitant transport of protons into the cell (symport system). Provides an alternative and minor mechanism for growth on trehalose carbon source by transporting trehalose into the cytoplasm for conversion to glucose by neutral trehalase NTH1. The polypeptide is General alpha-glucoside permease (Saccharomyces cerevisiae (strain CEN.PK113-7D) (Baker's yeast)).